The following is a 503-amino-acid chain: Maturase K (503 aa).

The protein belongs to the intron maturase 2 family. MatK subfamily.

It is found in the plastid. The protein localises to the chloroplast. Usually encoded in the trnK tRNA gene intron. Probably assists in splicing its own and other chloroplast group II introns. This is Maturase K from Rhamnus cathartica (Common buckthorn).